The following is a 239-amino-acid chain: MIELDQTNIPKHVAIIMDGNGRWAKQKNKMRIFGHTNGVTAVRKAVAYARQIGVEVLTLYAFSSENWSRPEQEISALMSLFMQALDREVKKLHKNNICLKIIGDVSRFSETLQEKIKKAENLTEKNTALTLNIAANYGGCWDIIQAAKQIAEKVKKEEMSVSDINNSTFQHHLATQNAPPVDLLIRTSGEQRISNFLLWQIAYAELYFSDVLWPDFNQLEFNRAIASYQQRHRRFGGTE.

The active site involves aspartate 18. Aspartate 18 provides a ligand contact to Mg(2+). Residues 19–22 (GNGR), tryptophan 23, arginine 31, histidine 35, and 63–65 (SSE) each bind substrate. Asparagine 66 functions as the Proton acceptor in the catalytic mechanism. Residues tryptophan 67, arginine 69, arginine 186, and 192 to 194 (RIS) contribute to the substrate site. Glutamate 205 is a binding site for Mg(2+).

It belongs to the UPP synthase family. Homodimer. Mg(2+) is required as a cofactor.

The enzyme catalyses 8 isopentenyl diphosphate + (2E,6E)-farnesyl diphosphate = di-trans,octa-cis-undecaprenyl diphosphate + 8 diphosphate. In terms of biological role, catalyzes the sequential condensation of isopentenyl diphosphate (IPP) with (2E,6E)-farnesyl diphosphate (E,E-FPP) to yield (2Z,6Z,10Z,14Z,18Z,22Z,26Z,30Z,34E,38E)-undecaprenyl diphosphate (di-trans,octa-cis-UPP). UPP is the precursor of glycosyl carrier lipid in the biosynthesis of bacterial cell wall polysaccharide components such as peptidoglycan and lipopolysaccharide. This is Ditrans,polycis-undecaprenyl-diphosphate synthase ((2E,6E)-farnesyl-diphosphate specific) from Haemophilus influenzae (strain ATCC 51907 / DSM 11121 / KW20 / Rd).